We begin with the raw amino-acid sequence, 229 residues long: MEHSFKTIAAGVVIVVLLLQQAPVLIRATDADPLQDFCVADLDSKVTVNGHACKPASAAGDEFLFSSKIATGGDVNANPNGSNVTELDVAEWPGVNTLGVSMNRVDFAPGGTNPPHVHPRATEVGIVLRGELLVGIIGTLDTGNRYYSKVVRAGETFVIPRGLMHFQFNVGKTEATMVVSFNSQNPGIVFVPLTLFGSNPPIPTPVLVKALRVDAGVVELLKSKFTGGY.

A signal peptide spans 1 to 31; sequence MEHSFKTIAAGVVIVVLLLQQAPVLIRATDA. Cysteine 38 and cysteine 53 form a disulfide bridge. A Cupin type-1 domain is found at 67-219; the sequence is SKIATGGDVN…ALRVDAGVVE (153 aa). N-linked (GlcNAc...) asparagine glycans are attached at residues asparagine 80 and asparagine 83. Residues histidine 116, histidine 118, glutamate 123, and histidine 165 each coordinate Mn(2+).

This sequence belongs to the germin family. Oligomer (believed to be a pentamer but probably hexamer).

The protein localises to the secreted. Its subcellular location is the extracellular space. The protein resides in the apoplast. Functionally, may play a role in plant defense. Probably has no oxalate oxidase activity even if the active site is conserved. The protein is Germin-like protein 3-6 of Oryza sativa subsp. japonica (Rice).